Consider the following 252-residue polypeptide: Probable transcriptional regulatory protein Cagg_2594 (252 aa).

Positions 1-14 (MSGHSKWHTIRRAK) are enriched in basic residues. The segment at 1 to 22 (MSGHSKWHTIRRAKSANDQRRG) is disordered.

It belongs to the TACO1 family.

It localises to the cytoplasm. This Chloroflexus aggregans (strain MD-66 / DSM 9485) protein is Probable transcriptional regulatory protein Cagg_2594.